The sequence spans 155 residues: Histone H2B.4 (155 aa).

The span at methionine 1–alanine 28 shows a compositional bias: basic and acidic residues. Residues methionine 1–valine 62 are disordered. The span at proline 29 to lysine 40 shows a compositional bias: basic residues. Residue lysine 151 forms a Glycyl lysine isopeptide (Lys-Gly) (interchain with G-Cter in ubiquitin) linkage.

The protein belongs to the histone H2B family. The nucleosome is a histone octamer containing two molecules each of H2A, H2B, H3 and H4 assembled in one H3-H4 heterotetramer and two H2A-H2B heterodimers. The octamer wraps approximately 147 bp of DNA. Monoubiquitinated to form H2BK143ub1; may give a specific tag for epigenetic transcriptional activation.

Its subcellular location is the nucleus. It localises to the chromosome. In terms of biological role, core component of nucleosome. Nucleosomes wrap and compact DNA into chromatin, limiting DNA accessibility to the cellular machineries which require DNA as a template. Histones thereby play a central role in transcription regulation, DNA repair, DNA replication and chromosomal stability. DNA accessibility is regulated via a complex set of post-translational modifications of histones, also called histone code, and nucleosome remodeling. The protein is Histone H2B.4 of Volvox carteri (Green alga).